Here is an 83-residue protein sequence, read N- to C-terminus: uncharacterized protein (83 aa).

This is an uncharacterized protein from Bacillus anthracis.